Here is a 407-residue protein sequence, read N- to C-terminus: Expansin-like protein 2 (407 aa).

The N-terminal stretch at 1–23 is a signal peptide; it reads MKMKNFLSKSLLVLLIGLIGVKS. Residues 42-141 enclose the Expansin-like EG45 domain; that stretch reads HGNCGYEQLT…KKVSCDVTGN (100 aa). Intrachain disulfides connect C45/C75 and C78/C136. N-linked (GlcNAc...) asparagine glycosylation is found at N70, N117, and N387.

Belongs to the expansin family. Expansin A subfamily.

It localises to the secreted. Unlikely to encode with a protein with expansin activity. The sequence is that of Expansin-like protein 2 (expl2) from Dictyostelium discoideum (Social amoeba).